Consider the following 125-residue polypeptide: Small ribosomal subunit protein uS13 (125 aa).

The interval 92–125 is disordered; it reads RRSLPVRGQRTQTNARTRKGKRKTVAGKKKATKK. Basic residues predominate over residues 107-125; that stretch reads RTRKGKRKTVAGKKKATKK.

Belongs to the universal ribosomal protein uS13 family. As to quaternary structure, part of the 30S ribosomal subunit. Forms a loose heterodimer with protein S19. Forms two bridges to the 50S subunit in the 70S ribosome.

Functionally, located at the top of the head of the 30S subunit, it contacts several helices of the 16S rRNA. In the 70S ribosome it contacts the 23S rRNA (bridge B1a) and protein L5 of the 50S subunit (bridge B1b), connecting the 2 subunits; these bridges are implicated in subunit movement. Contacts the tRNAs in the A and P-sites. The polypeptide is Small ribosomal subunit protein uS13 (Chlorobium phaeobacteroides (strain DSM 266 / SMG 266 / 2430)).